The following is a 437-amino-acid chain: MEHQLLSVAIDDTDSQYGGCTTHLTGLILKELGNRALLADYPLLVRLNPNIPWRTRGNAATVLRLLYDGDPKELMETLWSIIEEYTEPRPPLPGKSPGLVVAPGSPWESERLRWLYRKALSDVVTLDVATESLSKYGALWRGGRGVIGAASSLAALSPGEPYTFELTFYRRPENWGSRRCVYSDKVAYLEGQSSGTLNNLELDEGTTSAAPGGPDPVLAGFRGTDPGELWRFDEALCERPHFAVLYRSNQHTGVHLQAQEPRIYRSVNITVTVRSPPLKLPGGHVIVEVSDGVNTYDAAFYEDSGPLARAAELLYPGDVIIIAGGVRPYSPRGKLTISVEAMKVVGVAQRRVQVPPRCPRCGARMESLGRGKGYRCPRCGLRSSGHKQSLVVERELLPGSYYYKIGRARHLSPVGARLPTMDRLPVTINVSDVLRVY.

This sequence belongs to the TiaS family.

Its subcellular location is the cytoplasm. It carries out the reaction cytidine(34) in tRNA(Ile2) + agmatine + ATP + H2O = 2-agmatinylcytidine(34) in tRNA(Ile2) + AMP + 2 phosphate + 2 H(+). Its function is as follows. ATP-dependent agmatine transferase that catalyzes the formation of 2-agmatinylcytidine (agm2C) at the wobble position (C34) of tRNA(Ile2), converting the codon specificity from AUG to AUA. The chain is tRNA(Ile2) 2-agmatinylcytidine synthetase TiaS from Acidilobus saccharovorans (strain DSM 16705 / JCM 18335 / VKM B-2471 / 345-15).